Reading from the N-terminus, the 495-residue chain is MHEKSLTELRAALTAKECSAVELAQLYLKRIDAANSLNAFIQVDPDLTLAQAKAADALLHTGHAGPLVGLPIAHKDVFVTKGWRSTAGSKMLSNYESPFDATVVARLQNAGMVCVGKTNMDEFAMGSSNENSYFGPVQNPWDVKAVPGGSSGGSAAAVAARLAPAATGTDTGGSIRQPASFSGITGIKPTYGRVSRYGMIAFASSLDQGGPMAQSAADCATLLNAMAGFDERDSTSLVRDDEDYTRYLGKPWKEESAAKPLAGLRIGLPKEYFGAGLADDVRASVDAALKQYEALGATLVDVSLPKTELSIPVYYVIAPAEASSNLSRFDGVRFGHRAAEYRDLLDMYKKSRAEGFGPEVKRRILVGAYVLSHGYYDAYYLQAQKIRRIIAQDFQEAFKQCDVIMGPVAPSVAWDLGAKGDDPVQMYLADIYTLSVSLAGLPGMSVPCGFGAGANAQRPVGLQIIGNYFNEARMLQVADAFQRATDWHRKAPAGV.

Active-site charge relay system residues include K75 and S150. S174 (acyl-ester intermediate) is an active-site residue.

This sequence belongs to the amidase family. GatA subfamily. In terms of assembly, heterotrimer of A, B and C subunits.

The catalysed reaction is L-glutamyl-tRNA(Gln) + L-glutamine + ATP + H2O = L-glutaminyl-tRNA(Gln) + L-glutamate + ADP + phosphate + H(+). Its function is as follows. Allows the formation of correctly charged Gln-tRNA(Gln) through the transamidation of misacylated Glu-tRNA(Gln) in organisms which lack glutaminyl-tRNA synthetase. The reaction takes place in the presence of glutamine and ATP through an activated gamma-phospho-Glu-tRNA(Gln). The sequence is that of Glutamyl-tRNA(Gln) amidotransferase subunit A from Paraburkholderia phytofirmans (strain DSM 17436 / LMG 22146 / PsJN) (Burkholderia phytofirmans).